A 124-amino-acid chain; its full sequence is MAIAKEDILAAVEGMTVLELNELVKAFEEKFGVSAAAVAVAGPAGGGAAAAAEEKTEFTVVLTEAGSNKVAVIKAVRELTGLGLKEAKDVVDGAPKAVKEGVDKAAADEAKKKLEDAGAKVEVK.

It belongs to the bacterial ribosomal protein bL12 family. In terms of assembly, homodimer. Part of the ribosomal stalk of the 50S ribosomal subunit. Forms a multimeric L10(L12)X complex, where L10 forms an elongated spine to which 2 to 4 L12 dimers bind in a sequential fashion. Binds GTP-bound translation factors.

Its function is as follows. Forms part of the ribosomal stalk which helps the ribosome interact with GTP-bound translation factors. Is thus essential for accurate translation. This is Large ribosomal subunit protein bL12 from Burkholderia ambifaria (strain MC40-6).